A 294-amino-acid polypeptide reads, in one-letter code: DNA replication complex GINS protein SLD5 (294 aa).

This sequence belongs to the GINS4/SLD5 family. In terms of assembly, component of the GINS complex which is a heterotetramer composed of SLD5, PSF1, PSF2 and PSF3. Interacts with PSF2.

It is found in the nucleus. Required for DNA replication. Functions as part of the GINS complex which plays an essential role in the initiation of DNA replication by binding to DNA replication origins and facilitating the assembly of the DNA replication machinery. The chain is DNA replication complex GINS protein SLD5 from Saccharomyces cerevisiae (strain ATCC 204508 / S288c) (Baker's yeast).